A 173-amino-acid chain; its full sequence is Lectin BRA-2 (173 aa).

Asn39 carries N-linked (GlcNAc...) asparagine glycosylation. 3 cysteine pairs are disulfide-bonded: Cys47–Cys61, Cys78–Cys168, and Cys144–Cys160. The region spanning 51–170 is the C-type lectin domain; it reads PNGWVTSENK…NDRYNFVCEI (120 aa).

In terms of assembly, homohexamer; disulfide-linked. Coelemic fluid.

Its function is as follows. Sugar-binding protein which recognizes specific carbohydrate structures and agglutinates a variety of animal cells by binding to cell-surface glycoproteins and glycolipids. Calcium-dependent lectin. Invertebrate lectins may be involved in defense functions. The sequence is that of Lectin BRA-2 from Megabalanus rosa (Acorn barnacle).